The primary structure comprises 360 residues: Phospho-N-acetylmuramoyl-pentapeptide-transferase (360 aa).

A run of 10 helical transmembrane segments spans residues 27–47 (IVSL…LIAW), 72–92 (PTMG…MWAY), 94–114 (SNPY…VGFI), 132–152 (WKYF…YSIG), 168–188 (IMPQ…VGTS), 199–219 (GLAI…AWAT), 236–256 (AGEL…FLWF), 263–283 (VFMG…IAVL), 288–308 (FLLV…ILQV), and 338–358 (VIVR…ATLK).

The protein belongs to the glycosyltransferase 4 family. MraY subfamily. Requires Mg(2+) as cofactor.

Its subcellular location is the cell inner membrane. It catalyses the reaction UDP-N-acetyl-alpha-D-muramoyl-L-alanyl-gamma-D-glutamyl-meso-2,6-diaminopimeloyl-D-alanyl-D-alanine + di-trans,octa-cis-undecaprenyl phosphate = di-trans,octa-cis-undecaprenyl diphospho-N-acetyl-alpha-D-muramoyl-L-alanyl-D-glutamyl-meso-2,6-diaminopimeloyl-D-alanyl-D-alanine + UMP. It participates in cell wall biogenesis; peptidoglycan biosynthesis. Functionally, catalyzes the initial step of the lipid cycle reactions in the biosynthesis of the cell wall peptidoglycan: transfers peptidoglycan precursor phospho-MurNAc-pentapeptide from UDP-MurNAc-pentapeptide onto the lipid carrier undecaprenyl phosphate, yielding undecaprenyl-pyrophosphoryl-MurNAc-pentapeptide, known as lipid I. This chain is Phospho-N-acetylmuramoyl-pentapeptide-transferase, found in Yersinia pestis bv. Antiqua (strain Angola).